The following is a 98-amino-acid chain: NADH-ubiquinone oxidoreductase chain 4L (98 aa).

3 consecutive transmembrane segments (helical) span residues 1 to 21, 30 to 50, and 61 to 81; these read MSVV…GLLV, LLCL…TVLT, and IILL…LVMI.

The protein belongs to the complex I subunit 4L family. Core subunit of respiratory chain NADH dehydrogenase (Complex I) which is composed of 45 different subunits.

The protein localises to the mitochondrion inner membrane. It carries out the reaction a ubiquinone + NADH + 5 H(+)(in) = a ubiquinol + NAD(+) + 4 H(+)(out). In terms of biological role, core subunit of the mitochondrial membrane respiratory chain NADH dehydrogenase (Complex I) which catalyzes electron transfer from NADH through the respiratory chain, using ubiquinone as an electron acceptor. Part of the enzyme membrane arm which is embedded in the lipid bilayer and involved in proton translocation. This Lontra canadensis (North American river otter) protein is NADH-ubiquinone oxidoreductase chain 4L (MT-ND4L).